Here is a 156-residue protein sequence, read N- to C-terminus: Small ribosomal subunit protein uS7 (156 aa).

It belongs to the universal ribosomal protein uS7 family. In terms of assembly, part of the 30S ribosomal subunit. Contacts proteins S9 and S11.

Its function is as follows. One of the primary rRNA binding proteins, it binds directly to 16S rRNA where it nucleates assembly of the head domain of the 30S subunit. Is located at the subunit interface close to the decoding center, probably blocks exit of the E-site tRNA. This Oceanobacillus iheyensis (strain DSM 14371 / CIP 107618 / JCM 11309 / KCTC 3954 / HTE831) protein is Small ribosomal subunit protein uS7.